The sequence spans 906 residues: Protein transport protein SEC24-2 (906 aa).

4 residues coordinate Zn(2+): C222, C225, C244, and C247. The zinc finger-like stretch occupies residues 222 to 247; it reads CRRCRSYMNPFVTFIEQGRRWRCNFC.

Belongs to the SEC23/SEC24 family. SEC24 subfamily. As to quaternary structure, the COPII coat is composed of at least 5 proteins: the SEC23/24 complex, the SEC13/31 complex, and the protein SAR1. Golgi apparatus membrane; Peripheral membrane protein; Cytoplasmic side.

It localises to the cytoplasm. It is found in the cytoplasmic vesicle. The protein resides in the COPII-coated vesicle membrane. The protein localises to the endoplasmic reticulum membrane. Its subcellular location is the golgi apparatus membrane. Functionally, component of the coat protein complex II (COPII) which promotes the formation of transport vesicles from the endoplasmic reticulum (ER). The coat has two main functions, the physical deformation of the endoplasmic reticulum membrane into vesicles and the selection of cargo molecules. The polypeptide is Protein transport protein SEC24-2 (SEC242) (Candida glabrata (strain ATCC 2001 / BCRC 20586 / JCM 3761 / NBRC 0622 / NRRL Y-65 / CBS 138) (Yeast)).